We begin with the raw amino-acid sequence, 483 residues long: Docking protein 1 (483 aa).

Met-1 carries the post-translational modification N-acetylmethionine. The region spanning 4–119 (AVMEGPLFLQ…WVQTLCQNAF (116 aa)) is the PH domain. Ser-48 carries the phosphoserine modification. The IRS-type PTB domain occupies 151–259 (EGSQFWVTVQ…HRQKIQGKAG (109 aa)). Phosphoserine is present on residues Ser-269 and Ser-291. The tract at residues 293 to 326 (PALYSEPLDSLRIPPGPSQDSLYSDPLDSTPARA) is disordered. Residues Tyr-296, Tyr-337, Tyr-362, Tyr-377, Tyr-398, and Tyr-409 each carry the phosphotyrosine modification. The segment at 409–483 (YAVPPPRSTK…RTGAKSEGST (75 aa)) is disordered. The span at 411-424 (VPPPRSTKPFPAPK) shows a compositional bias: pro residues. Residue Ser-416 is modified to Phosphoserine. Over residues 434-460 (GAATGSGSQGHSSDTALYSQVQKSGAS) the composition is skewed to polar residues. The residue at position 451 (Tyr-451) is a Phosphotyrosine. Ser-462 is subject to Phosphoserine.

It belongs to the DOK family. Type A subfamily. In terms of assembly, interacts with RasGAP, INPP5D/SHIP1 and ABL1. Interacts directly with phosphorylated ITGB3. Interacts with SRMS (via the SH2 and SH3 domains). In terms of processing, constitutively tyrosine-phosphorylated. Phosphorylated by TEC. Phosphorylated by LYN. Phosphorylated on tyrosine residues by the insulin receptor kinase. Results in the negative regulation of the insulin signaling pathway. Phosphorylated on tyrosine residues by SRMS.

It localises to the cytoplasm. The protein resides in the nucleus. In terms of biological role, DOK proteins are enzymatically inert adaptor or scaffolding proteins. They provide a docking platform for the assembly of multimolecular signaling complexes. DOK1 appears to be a negative regulator of the insulin signaling pathway. Modulates integrin activation by competing with talin for the same binding site on ITGB3. The protein is Docking protein 1 (DOK1) of Bos taurus (Bovine).